The sequence spans 177 residues: Dual-action ribosomal maturation protein DarP (177 aa).

The interval 1–26 is disordered; it reads MKIVGDSEHFKQPYDSDEEYVSKTED.

Belongs to the DarP family.

The protein resides in the cytoplasm. Member of a network of 50S ribosomal subunit biogenesis factors which assembles along the 30S-50S interface, preventing incorrect 23S rRNA structures from forming. Promotes peptidyl transferase center (PTC) maturation. This is Dual-action ribosomal maturation protein DarP from Shewanella sp. (strain ANA-3).